The following is a 480-amino-acid chain: Proline--tRNA ligase (480 aa).

This sequence belongs to the class-II aminoacyl-tRNA synthetase family. ProS type 3 subfamily. Homodimer.

It localises to the cytoplasm. The enzyme catalyses tRNA(Pro) + L-proline + ATP = L-prolyl-tRNA(Pro) + AMP + diphosphate. In terms of biological role, catalyzes the attachment of proline to tRNA(Pro) in a two-step reaction: proline is first activated by ATP to form Pro-AMP and then transferred to the acceptor end of tRNA(Pro). This chain is Proline--tRNA ligase, found in Chloroflexus aggregans (strain MD-66 / DSM 9485).